A 445-amino-acid polypeptide reads, in one-letter code: GTPase Der (445 aa).

EngA-type G domains lie at 3–167 (PVIA…YAGQ) and 180–353 (VKIA…AAAM). GTP-binding positions include 9 to 16 (GRPNVGKS), 56 to 60 (DTGGF), 119 to 122 (NKAE), 186 to 193 (GRPNVGKS), 233 to 237 (DTAGL), and 298 to 301 (NKWD). A KH-like domain is found at 354–438 (AKLPTPKLTR…PLRIEFRSST (85 aa)).

This sequence belongs to the TRAFAC class TrmE-Era-EngA-EngB-Septin-like GTPase superfamily. EngA (Der) GTPase family. Associates with the 50S ribosomal subunit.

Its function is as follows. GTPase that plays an essential role in the late steps of ribosome biogenesis. This Paraburkholderia xenovorans (strain LB400) protein is GTPase Der.